Reading from the N-terminus, the 530-residue chain is Hyccin 2 (530 aa).

Phosphothreonine occurs at positions 30 and 306. Serine 321 and serine 341 each carry phosphoserine. The disordered stretch occupies residues arginine 328 to glutamine 410. Polar residues predominate over residues serine 353–glycine 373. Phosphoserine occurs at positions 430, 442, 444, and 491. The segment at glutamate 502–valine 530 is disordered. The span at threonine 514 to valine 530 shows a compositional bias: polar residues.

The protein belongs to the Hyccin family. As to quaternary structure, component of a phosphatidylinositol 4-kinase (PI4K) complex, composed of PI4KA, EFR3 (EFR3A or EFR3B), TTC7 (TTC7A or TTC7B) and HYCC (HYCC1 or HYCC2).

Its subcellular location is the cytoplasm. The protein resides in the cytosol. It localises to the cell membrane. Functionally, component of a complex required to localize phosphatidylinositol 4-kinase (PI4K) to the plasma membrane. This Homo sapiens (Human) protein is Hyccin 2.